A 112-amino-acid polypeptide reads, in one-letter code: MAEDIEEIRKRKLMELQKKYLEQQKAQEEALKREMELEAQLEAIMRKILTPEARERLGRVKLVKPELARQVELLLVQLYQAGQIRERIDDAKLKRILAEIDARTRRDFKIKW.

This sequence belongs to the PDCD5 family.

This is DNA-binding protein TK1278 from Thermococcus kodakarensis (strain ATCC BAA-918 / JCM 12380 / KOD1) (Pyrococcus kodakaraensis (strain KOD1)).